Consider the following 518-residue polypeptide: GMP synthase [glutamine-hydrolyzing] (518 aa).

Residues 6-200 (RLLIIDFGSQ…FVRLAGFKGD (195 aa)) form the Glutamine amidotransferase type-1 domain. C84 serves as the catalytic Nucleophile. Catalysis depends on residues H175 and E177. Residues 201–393 (WTMGAYREEA…LGLPESFIGR (193 aa)) form the GMPS ATP-PPase domain. 228–234 (SGGVDSS) contacts ATP.

As to quaternary structure, homodimer.

It carries out the reaction XMP + L-glutamine + ATP + H2O = GMP + L-glutamate + AMP + diphosphate + 2 H(+). The protein operates within purine metabolism; GMP biosynthesis; GMP from XMP (L-Gln route): step 1/1. Catalyzes the synthesis of GMP from XMP. In Cereibacter sphaeroides (strain ATCC 17029 / ATH 2.4.9) (Rhodobacter sphaeroides), this protein is GMP synthase [glutamine-hydrolyzing].